A 488-amino-acid polypeptide reads, in one-letter code: MAHFNQNFLDSIERDLPSHLSMEDFIAYSNKPLRLSIRVNTLKISHDNFIDLMTPKGWHFEPIPWCKDGFWVTLTQEIQLGNTIEHLQGLFYIQEASSMLPPTALFEPLEVAVAAENTEDDGSDDFSNKIVLDMASAPGSKTTQIAALMKNQGLLIANEYSASRVKVLHANVARMGVANCALTHFDARVFGEYMFETFDSILLDAPCSGEGTIRKDPDALKNWDNNDDKGIVETQKALIESAFLALKVGGSLVYSTCALSRQENQDVCHHLKSLYGDAVEFGSLATLFPQADKACTEEGFLHVWPQIYDSEGFFVAKIYKTSAVERQLPEPRKQKNFPFTLAKPKQVEELAQYFRDSFSISLPDNAQVMVRDLEFWLFPSPVIPLIGKMRYQRIGIKLADALKKGYKVRHEAVLALSSPTRFELSDEQAKEFLMGRDISLLEKGKPQGEVIVSYASNPLGVAKHLGNKLKNNLPRDLVKDKIALYSHN.

S-adenosyl-L-methionine is bound by residues 135 to 141, Glu-159, Asp-186, and Asp-204; that span reads ASAPGSK. Catalysis depends on Cys-257, which acts as the Nucleophile.

Belongs to the class I-like SAM-binding methyltransferase superfamily. RsmB/NOP family.

It localises to the cytoplasm. The catalysed reaction is cytidine(1407) in 16S rRNA + S-adenosyl-L-methionine = 5-methylcytidine(1407) in 16S rRNA + S-adenosyl-L-homocysteine + H(+). In terms of biological role, specifically methylates the cytosine at position 1407 (m5C1407) of 16S rRNA. This chain is Ribosomal RNA small subunit methyltransferase F, found in Shewanella pealeana (strain ATCC 700345 / ANG-SQ1).